A 213-amino-acid polypeptide reads, in one-letter code: Ribosomal RNA large subunit methyltransferase E (213 aa).

Residues Gly59, Phe61, Asp79, Asp97, and Asp121 each contribute to the S-adenosyl-L-methionine site. Lys161 acts as the Proton acceptor in catalysis.

It belongs to the class I-like SAM-binding methyltransferase superfamily. RNA methyltransferase RlmE family.

The protein resides in the cytoplasm. It catalyses the reaction uridine(2552) in 23S rRNA + S-adenosyl-L-methionine = 2'-O-methyluridine(2552) in 23S rRNA + S-adenosyl-L-homocysteine + H(+). Functionally, specifically methylates the uridine in position 2552 of 23S rRNA at the 2'-O position of the ribose in the fully assembled 50S ribosomal subunit. This is Ribosomal RNA large subunit methyltransferase E from Myxococcus xanthus (strain DK1622).